The primary structure comprises 307 residues: N-acetylmuramic acid 6-phosphate etherase (307 aa).

The region spanning 62–225 (VVDAFRVGGR…TTASMIRIGK (164 aa)) is the SIS domain. The Proton donor role is filled by Glu90. Glu121 is a catalytic residue.

Belongs to the GCKR-like family. MurNAc-6-P etherase subfamily. In terms of assembly, homodimer.

It catalyses the reaction N-acetyl-D-muramate 6-phosphate + H2O = N-acetyl-D-glucosamine 6-phosphate + (R)-lactate. It functions in the pathway amino-sugar metabolism; 1,6-anhydro-N-acetylmuramate degradation. It participates in amino-sugar metabolism; N-acetylmuramate degradation. The protein operates within cell wall biogenesis; peptidoglycan recycling. Its function is as follows. Specifically catalyzes the cleavage of the D-lactyl ether substituent of MurNAc 6-phosphate, producing GlcNAc 6-phosphate and D-lactate. Together with AnmK, is also required for the utilization of anhydro-N-acetylmuramic acid (anhMurNAc) either imported from the medium or derived from its own cell wall murein, and thus plays a role in cell wall recycling. This chain is N-acetylmuramic acid 6-phosphate etherase, found in Brucella anthropi (strain ATCC 49188 / DSM 6882 / CCUG 24695 / JCM 21032 / LMG 3331 / NBRC 15819 / NCTC 12168 / Alc 37) (Ochrobactrum anthropi).